The sequence spans 308 residues: Protoheme IX farnesyltransferase (308 aa).

8 helical membrane passes run 20 to 40 (LLAY…VTAI), 50 to 70 (AIHP…AAGA), 102 to 122 (NALA…WCAT), 124 to 144 (LLAG…YTLW), 149 to 169 (TSQN…IGWS), 170 to 190 (AITG…FFWT), 227 to 249 (LIYT…WLYG), and 288 to 308 (YLAV…PTLH).

It belongs to the UbiA prenyltransferase family. Protoheme IX farnesyltransferase subfamily.

It is found in the cell membrane. It catalyses the reaction heme b + (2E,6E)-farnesyl diphosphate + H2O = Fe(II)-heme o + diphosphate. It functions in the pathway porphyrin-containing compound metabolism; heme O biosynthesis; heme O from protoheme: step 1/1. Its function is as follows. Converts heme B (protoheme IX) to heme O by substitution of the vinyl group on carbon 2 of heme B porphyrin ring with a hydroxyethyl farnesyl side group. This Mycobacterium tuberculosis (strain ATCC 25618 / H37Rv) protein is Protoheme IX farnesyltransferase.